We begin with the raw amino-acid sequence, 474 residues long: ATP synthase subunit beta 2 (474 aa).

ATP is bound at residue 157–164; sequence GGAGVGKT.

It belongs to the ATPase alpha/beta chains family. F-type ATPases have 2 components, CF(1) - the catalytic core - and CF(0) - the membrane proton channel. CF(1) has five subunits: alpha(3), beta(3), gamma(1), delta(1), epsilon(1). CF(0) has three main subunits: a(1), b(2) and c(9-12). The alpha and beta chains form an alternating ring which encloses part of the gamma chain. CF(1) is attached to CF(0) by a central stalk formed by the gamma and epsilon chains, while a peripheral stalk is formed by the delta and b chains.

It is found in the cell inner membrane. It carries out the reaction ATP + H2O + 4 H(+)(in) = ADP + phosphate + 5 H(+)(out). Its function is as follows. Produces ATP from ADP in the presence of a proton gradient across the membrane. The catalytic sites are hosted primarily by the beta subunits. The chain is ATP synthase subunit beta 2 from Polaromonas naphthalenivorans (strain CJ2).